The following is a 166-amino-acid chain: Regulatory protein RecX (166 aa).

The protein belongs to the RecX family.

The protein localises to the cytoplasm. In terms of biological role, modulates RecA activity. This is Regulatory protein RecX from Salmonella agona (strain SL483).